The sequence spans 926 residues: Neurofilament medium polypeptide (926 aa).

The segment covering M1 to N10 has biased composition (polar residues). Disordered stretches follow at residues M1–S51 and Q79–K102. S2 carries the N-acetylserine modification. The segment at S2–Q104 is head. Over residues R21 to S44 the composition is skewed to low complexity. S30 bears the Phosphoserine mark. The residue at position 42 (R42) is an Omega-N-methylarginine. An O-linked (GlcNAc) threonine glycan is attached at T47. Phosphoserine is present on S99. Residues E101–F412 form the IF rod domain. The segment at I105–L136 is coil 1A. The linker 1 stretch occupies residues R137–A149. Positions Y150–Q248 are coil 1B. S226 is modified (phosphoserine). The tract at residues I249–D265 is linker 12. The interval I266–Q287 is coil 2A. The segment at A288–W291 is linker 2. Residues F292–F412 are coil 2B. Y320 carries the post-translational modification Phosphotyrosine. Phosphoserine is present on residues S346, S418, S430, S468, and S484. Residues S413–D926 form a tail region. The tract at residues E487–E860 is disordered. Positions K490–V507 are enriched in acidic residues. Repeat 1 spans residues K512–K516. Positions K512–E698 are 17 X 5 AA approximate tandem repeats of K-S-P-[TVEA]-[AKETP]. S513 is subject to Phosphoserine. A compositionally biased stretch (acidic residues) spans K523–E543. A compositionally biased stretch (basic and acidic residues) spans A544–K563. Residues S547, S555, S560, and S561 each carry the phosphoserine modification. A compositionally biased stretch (acidic residues) spans E564–A584. A Phosphothreonine modification is found at T574. Positions A585–K619 are enriched in basic and acidic residues. 16 consecutive repeat copies span residues K619–A623, K624–T628, K629–A633, K634–A638, K639–A643, K644–A648, K649–A653, K654–A658, K659–A663, K664–A668, K669–A673, K674–A678, K679–A683, K684–A688, K689–P693, and K694–E698. T628 is modified (phosphothreonine). 3 positions are modified to phosphoserine: S630, S635, and S640. Residue T647 is modified to Phosphothreonine. Phosphoserine is present on residues S650 and S655. Phosphoserine occurs at positions 665 and 670. Positions A673–A692 are enriched in low complexity. At T677 the chain carries Phosphothreonine. S680, S685, S690, S695, S727, S751, S757, S771, S831, and S847 each carry phosphoserine. Composition is skewed to basic and acidic residues over residues P696 to P764, S771 to I811, and T826 to G838. Over residues G849–E860 the composition is skewed to basic and acidic residues.

Forms heterodimers with NEFL; which can further hetero-oligomerize (in vitro). Forms heterodimers with INA (in vitro). Post-translationally, phosphorylated on a number of serine residues in the repeated K-S-P tripeptide motif. Phosphorylation of NFH may result in the formation of interfilament cross-links that are important in the maintenance of axonal caliber. Phosphorylation seems to play a major role in the functioning of the larger neurofilament polypeptides (NF-M and NF-H), the levels of phosphorylation being altered developmentally and coincidentally with a change in the neurofilament function. In terms of processing, phosphorylated in the head and rod regions by the PKC kinase PKN1, leading to the inhibition of polymerization.

The protein localises to the cytoplasm. Its subcellular location is the cytoskeleton. It is found in the cell projection. It localises to the axon. Neurofilaments usually contain three intermediate filament proteins: NEFL, NEFM, and NEFH which are involved in the maintenance of neuronal caliber. May additionally cooperate with the neuronal intermediate filament proteins PRPH and INA to form neuronal filamentous networks. The chain is Neurofilament medium polypeptide (NEFM) from Bos taurus (Bovine).